Reading from the N-terminus, the 413-residue chain is Putative syntaxin-5 (413 aa).

Residues 1 to 391 (MSDFHNIRSR…RYLQNISKNR (391 aa)) lie on the Cytoplasmic side of the membrane. The tract at residues 257–290 (KNRRDKFSSGAAVPMGLPSSSSGANVRSKLLQDD) is disordered. A t-SNARE coiled-coil homology domain is found at 321 to 383 (LEYAQARSNT…DMAHSELVRY (63 aa)). Residues 392–412 (WLMIQVFGVLMVFFVVFVLFL) traverse the membrane as a helical; Anchor for type IV membrane protein segment. Threonine 413 is a topological domain (extracellular).

This sequence belongs to the syntaxin family.

Its subcellular location is the membrane. In terms of biological role, potentially involved in docking of synaptic vesicles at presynaptic active zones. This chain is Putative syntaxin-5 (syx-5), found in Caenorhabditis elegans.